The following is a 228-amino-acid chain: Cytochrome c oxidase subunit 2 (228 aa).

At 1–26 (MATWANLGLQNSSSPLMEQLNFFHDH) the chain is on the mitochondrial intermembrane side. The chain crosses the membrane as a helical span at residues 27-48 (TLLILIMITVMIAYIMFMLFFN). Over 49–62 (KFTNRYLLHGQTIE) the chain is Mitochondrial matrix. The helical transmembrane segment at 63 to 82 (IIWTILPAIILMFIAFPSLR) threads the bilayer. The Mitochondrial intermembrane segment spans residues 83–228 (LLYLMDEINS…FIKWISSQMN (146 aa)). Positions 161, 196, 198, 200, 204, and 207 each coordinate Cu cation. Glutamate 198 contacts Mg(2+).

The protein belongs to the cytochrome c oxidase subunit 2 family. Component of the cytochrome c oxidase (complex IV, CIV), a multisubunit enzyme composed of a catalytic core of 3 subunits and several supernumerary subunits. The complex exists as a monomer or a dimer and forms supercomplexes (SCs) in the inner mitochondrial membrane with ubiquinol-cytochrome c oxidoreductase (cytochrome b-c1 complex, complex III, CIII). It depends on Cu cation as a cofactor.

It is found in the mitochondrion inner membrane. The enzyme catalyses 4 Fe(II)-[cytochrome c] + O2 + 8 H(+)(in) = 4 Fe(III)-[cytochrome c] + 2 H2O + 4 H(+)(out). Component of the cytochrome c oxidase, the last enzyme in the mitochondrial electron transport chain which drives oxidative phosphorylation. The respiratory chain contains 3 multisubunit complexes succinate dehydrogenase (complex II, CII), ubiquinol-cytochrome c oxidoreductase (cytochrome b-c1 complex, complex III, CIII) and cytochrome c oxidase (complex IV, CIV), that cooperate to transfer electrons derived from NADH and succinate to molecular oxygen, creating an electrochemical gradient over the inner membrane that drives transmembrane transport and the ATP synthase. Cytochrome c oxidase is the component of the respiratory chain that catalyzes the reduction of oxygen to water. Electrons originating from reduced cytochrome c in the intermembrane space (IMS) are transferred via the dinuclear copper A center (CU(A)) of subunit 2 and heme A of subunit 1 to the active site in subunit 1, a binuclear center (BNC) formed by heme A3 and copper B (CU(B)). The BNC reduces molecular oxygen to 2 water molecules using 4 electrons from cytochrome c in the IMS and 4 protons from the mitochondrial matrix. The sequence is that of Cytochrome c oxidase subunit 2 (COII) from Aedes aegypti (Yellowfever mosquito).